We begin with the raw amino-acid sequence, 391 residues long: Phosphoglycerate kinase (391 aa).

Substrate contacts are provided by residues 21–23 (DLN), Arg36, 59–62 (HLGR), Arg113, and Arg146. Residues Lys197, Glu319, and 345–348 (GGDT) contribute to the ATP site.

The protein belongs to the phosphoglycerate kinase family. As to quaternary structure, monomer.

The protein resides in the cytoplasm. The enzyme catalyses (2R)-3-phosphoglycerate + ATP = (2R)-3-phospho-glyceroyl phosphate + ADP. It participates in carbohydrate degradation; glycolysis; pyruvate from D-glyceraldehyde 3-phosphate: step 2/5. This Shewanella sp. (strain ANA-3) protein is Phosphoglycerate kinase.